A 399-amino-acid polypeptide reads, in one-letter code: Lipid droplet-regulating VLDL assembly factor AUP1 (399 aa).

Residues 1–21 (MEQPSLESMLELQRFPRNPFS) lie on the Cytoplasmic side of the membrane. The stretch at 22–42 (LVLLLLYFPFGLCLFLIRLFI) is an intramembrane region. At 43-399 (GAHVFLVSCV…GEEEEEGARG (357 aa)) the chain is on the cytoplasmic side. In terms of domain architecture, CUE spans 284–326 (THIQMAQHVKEVLPQVPLSAIHRDLGHTGCVDTTITNFLEGRV). The interval 332–364 (EEETTGAAEGTSKSRVSRPLPQGFAKKPEDRHL) is disordered.

The protein belongs to the AUP1 family.

It is found in the endoplasmic reticulum membrane. The protein localises to the lipid droplet. Plays a role in the translocation of terminally misfolded proteins from the endoplasmic reticulum lumen to the cytoplasm and their degradation by the proteasome. Plays a role in lipid droplet formation. Induces lipid droplet clustering. In Xenopus laevis (African clawed frog), this protein is Lipid droplet-regulating VLDL assembly factor AUP1.